Reading from the N-terminus, the 460-residue chain is A-type ATP synthase subunit B 1 (460 aa).

This sequence belongs to the ATPase alpha/beta chains family. In terms of assembly, has multiple subunits with at least A(3), B(3), C, D, E, F, H, I and proteolipid K(x).

Its subcellular location is the cell membrane. Its function is as follows. Component of the A-type ATP synthase that produces ATP from ADP in the presence of a proton gradient across the membrane. The B chain is a regulatory subunit. The chain is A-type ATP synthase subunit B 1 from Methanospirillum hungatei JF-1 (strain ATCC 27890 / DSM 864 / NBRC 100397 / JF-1).